A 354-amino-acid polypeptide reads, in one-letter code: S-adenosylmethionine:tRNA ribosyltransferase-isomerase (354 aa).

The protein belongs to the QueA family. Monomer.

The protein resides in the cytoplasm. It carries out the reaction 7-aminomethyl-7-carbaguanosine(34) in tRNA + S-adenosyl-L-methionine = epoxyqueuosine(34) in tRNA + adenine + L-methionine + 2 H(+). The protein operates within tRNA modification; tRNA-queuosine biosynthesis. Functionally, transfers and isomerizes the ribose moiety from AdoMet to the 7-aminomethyl group of 7-deazaguanine (preQ1-tRNA) to give epoxyqueuosine (oQ-tRNA). The protein is S-adenosylmethionine:tRNA ribosyltransferase-isomerase of Salmonella newport (strain SL254).